Here is a 427-residue protein sequence, read N- to C-terminus: Gamma-glutamyl phosphate reductase (427 aa).

Belongs to the gamma-glutamyl phosphate reductase family.

It localises to the cytoplasm. It catalyses the reaction L-glutamate 5-semialdehyde + phosphate + NADP(+) = L-glutamyl 5-phosphate + NADPH + H(+). It functions in the pathway amino-acid biosynthesis; L-proline biosynthesis; L-glutamate 5-semialdehyde from L-glutamate: step 2/2. Functionally, catalyzes the NADPH-dependent reduction of L-glutamate 5-phosphate into L-glutamate 5-semialdehyde and phosphate. The product spontaneously undergoes cyclization to form 1-pyrroline-5-carboxylate. The polypeptide is Gamma-glutamyl phosphate reductase (Allorhizobium ampelinum (strain ATCC BAA-846 / DSM 112012 / S4) (Agrobacterium vitis (strain S4))).